We begin with the raw amino-acid sequence, 363 residues long: MESIFHERQEGSLCAQHCLNNLLQGEYFSPVELSSIAQQLDEEERMRMAEGGVSSEEYRTFLQQPSVNMDDSGFFSIQVISNALKVWGLELILFNSPEYQRLGIDPINEKSFICNYKEHWFTVRKLGKQWFNLNSLLMGPELISDTYLALFLAQLQQEGYSIFVVKGDLPDCEADQLLQMIRVQQVQRPKLIGEETAQSRDQRLPRSDVDQAIEVSHPFDGTGMLDEDEENFQRALALSRQEIDMEDEEADLRRAIQLSMQGSRQSEFSNSLPQNASQPPHTSQTDSLSSEDLRRRRQAYFEKQQQQLQQQDLTLNLHDKPTINSSTLEADPGGDMSEEDMLQAAMNMSLESARNHLSTEEKK.

The Josephin domain maps to 1–180 (MESIFHERQE…DCEADQLLQM (180 aa)). The Nucleophile role is filled by C14. The Proton acceptor role is filled by H119. Residue N134 is part of the active site. Over residues 192–209 (IGEETAQSRDQRLPRSDV) the composition is skewed to basic and acidic residues. Positions 192-212 (IGEETAQSRDQRLPRSDVDQA) are disordered. 3 UIM domains span residues 227–246 (EDEE…IDME), 247–266 (DEEA…SRQS), and 337–356 (SEED…ARNH). The span at 260 to 290 (MQGSRQSEFSNSLPQNASQPPHTSQTDSLSS) shows a compositional bias: polar residues. The tract at residues 260-363 (MQGSRQSEFS…RNHLSTEEKK (104 aa)) is disordered. Residues 353–363 (ARNHLSTEEKK) show a composition bias toward basic and acidic residues.

In terms of tissue distribution, widely expressed.

It localises to the nucleus matrix. Its subcellular location is the nucleus. It is found in the lysosome membrane. It catalyses the reaction Thiol-dependent hydrolysis of ester, thioester, amide, peptide and isopeptide bonds formed by the C-terminal Gly of ubiquitin (a 76-residue protein attached to proteins as an intracellular targeting signal).. Deubiquitinating enzyme involved in protein homeostasis maintenance, transcription, cytoskeleton regulation, myogenesis and degradation of misfolded chaperone substrates. Binds long polyubiquitin chains and trims them, while it has weak or no activity against chains of 4 or less ubiquitins. Involved in degradation of misfolded chaperone substrates via its interaction with STUB1/CHIP: recruited to monoubiquitinated STUB1/CHIP, and restricts the length of ubiquitin chain attached to STUB1/CHIP substrates and preventing further chain extension. Interacts with key regulators of transcription and represses transcription: acts as a histone-binding protein that regulates transcription. Acts as a negative regulator of mTORC1 signaling in response to amino acid deprivation by mediating deubiquitination of RHEB, thereby promoting RHEB inactivation by the TSC-TBC complex. Regulates autophagy via the deubiquitination of 'Lys-402' of BECN1 leading to the stabilization of BECN1. The polypeptide is Ataxin-3 (ATXN3) (Gallus gallus (Chicken)).